Reading from the N-terminus, the 465-residue chain is Gamma-aminobutyric acid receptor subunit gamma-1 (465 aa).

An N-terminal signal peptide occupies residues 1–20 (MGSGKVFLFSPSLLWSQTRG). Residues 21-273 (VRLIFLLLTL…FDLSRRMGYF (253 aa)) are Extracellular-facing. Asparagine 50 and asparagine 127 each carry an N-linked (GlcNAc...) asparagine glycan. A disulfide bridge links cysteine 188 with cysteine 202. Residue asparagine 245 is glycosylated (N-linked (GlcNAc...) asparagine). The helical transmembrane segment at 274-294 (TIQTYIPCILTVVLSWVSFWI) threads the bilayer. The Cytoplasmic segment spans residues 295 to 300 (NKDAVP). A helical membrane pass occupies residues 301–320 (ARTSLGITTVLTMTTLSTIA). The Extracellular segment spans residues 321–328 (RKSLPKVS). A helical transmembrane segment spans residues 329-349 (YVTAMDLFVSVCFIFVFAALM). Over 350–444 (EYGTLHYFTS…RIAKIDSYSR (95 aa)) the chain is Cytoplasmic. Residues 445 to 465 (IFFPTAFALFNLVYWVGYLYL) form a helical membrane-spanning segment.

This sequence belongs to the ligand-gated ion channel (TC 1.A.9) family. Gamma-aminobutyric acid receptor (TC 1.A.9.5) subfamily. GABRG1 sub-subfamily. As to quaternary structure, heteropentamer, formed by a combination of alpha (GABRA1-6), beta (GABRB1-3), gamma (GABRG1-3), delta (GABRD), epsilon (GABRE), rho (GABRR1-3), pi (GABRP) and theta (GABRQ) chains, each subunit exhibiting distinct physiological and pharmacological properties. May be palmitoylated. In terms of tissue distribution, expressed in brain.

It localises to the postsynaptic cell membrane. Its subcellular location is the cell membrane. It carries out the reaction chloride(in) = chloride(out). Its function is as follows. Gamma subunit of the heteropentameric ligand-gated chloride channel gated by gamma-aminobutyric acid (GABA), a major inhibitory neurotransmitter in the brain. GABA-gated chloride channels, also named GABA(A) receptors (GABAAR), consist of five subunits arranged around a central pore and contain GABA active binding site(s) located at the alpha and beta subunit interface(s). When activated by GABA, GABAARs selectively allow the flow of chloride anions across the cell membrane down their electrochemical gradient. Chloride influx into the postsynaptic neuron following GABAAR opening decreases the neuron ability to generate a new action potential, thereby reducing nerve transmission. The chain is Gamma-aminobutyric acid receptor subunit gamma-1 from Rattus norvegicus (Rat).